A 241-amino-acid chain; its full sequence is Chaperone protein HifB (241 aa).

The signal sequence occupies residues 1 to 27; it reads MGKTMFKKTLLFFTALFFAALCAFSAN.

Belongs to the periplasmic pilus chaperone family.

It is found in the periplasm. In terms of biological role, mediates assembly of pili by forming soluble multimeric complexes with pili subunits as an intermediate step in the assembly process. This protein is involved in type B pili (HifA) assembly. This Haemophilus influenzae protein is Chaperone protein HifB (hifB).